The primary structure comprises 266 residues: Cysteine-rich repeat secretory protein 41 (266 aa).

Residues 1–26 (MSSVFGSVHILAMIAIQLLLTHSVSS) form the signal peptide. Gnk2-homologous domains lie at 33–136 (YLHH…SVAS) and 142–253 (YEND…LYPF).

The protein belongs to the cysteine-rich repeat secretory protein family.

The protein resides in the secreted. The chain is Cysteine-rich repeat secretory protein 41 (CRRSP41) from Arabidopsis thaliana (Mouse-ear cress).